The primary structure comprises 196 residues: Chromophore lyase CpcT/CpeT (196 aa).

This sequence belongs to the CpcT/CpeT biliprotein lyase family.

In terms of biological role, covalently attaches a chromophore to Cys residue(s) of phycobiliproteins. This chain is Chromophore lyase CpcT/CpeT, found in Synechocystis sp. (strain ATCC 27184 / PCC 6803 / Kazusa).